The chain runs to 411 residues: Secretion apparatus protein BsaZ (411 aa).

The next 4 membrane-spanning stretches (helical) occupy residues 28 to 48 (IVAL…VDLT), 80 to 100 (IAAP…LVQS), 137 to 157 (ALLY…LYHA), and 175 to 195 (IVLT…VLIL). Positions 341–411 (AANRGGPPPE…APARTGDQNA (71 aa)) are disordered. Over residues 370–404 (DACADNAFPDDAPPGAAAPNAGSPDSPAPDGGAPA) the composition is skewed to low complexity.

This sequence belongs to the type III secretion exporter family.

Its subcellular location is the cell membrane. Part of the bsa type III secretion system, is involved in the intracellular replication of invading bacteria inside the host cell. Probably necessary for the lysis of the vacuole membrane and escape into the host cell cytoplasm. This chain is Secretion apparatus protein BsaZ (bsaZ), found in Burkholderia pseudomallei (strain 1106a).